The primary structure comprises 186 residues: Lipid A palmitoyltransferase PagP (186 aa).

An N-terminal signal peptide occupies residues 1 to 25 (MNVSKYVAIFSFVFIQLISVGKVFA). Catalysis depends on residues histidine 58, aspartate 101, and serine 102.

It belongs to the lipid A palmitoyltransferase family. As to quaternary structure, homodimer.

The protein resides in the cell outer membrane. It catalyses the reaction lipid A (E. coli) + a 1-hexadecanoyl-2-acyl-sn-glycero-3-phosphocholine = hepta-acyl lipid A (E. coli) + a 2-acyl-sn-glycero-3-phosphocholine. The enzyme catalyses lipid IIA + a 1-hexadecanoyl-2-acyl-sn-glycero-3-phosphocholine = lipid IIB + a 2-acyl-sn-glycero-3-phosphocholine. The catalysed reaction is lipid IVA (E. coli) + a 1-hexadecanoyl-2-acyl-sn-glycero-3-phosphocholine = lipid IVB (E. coli) + a 2-acyl-sn-glycero-3-phosphocholine. In terms of biological role, transfers a palmitate residue from the sn-1 position of a phospholipid to the N-linked hydroxymyristate on the proximal unit of lipid A or its precursors. The protein is Lipid A palmitoyltransferase PagP of Escherichia coli (strain ATCC 55124 / KO11FL).